A 600-amino-acid chain; its full sequence is Melanophilin (600 aa).

Residues lysine 4 to histidine 124 form the RabBD domain. Residues cysteine 64–cysteine 107 form an FYVE-type zinc finger. 4 disordered regions span residues glutamine 146–cysteine 277, glutamate 390–leucine 465, threonine 499–methionine 541, and asparagine 553–serine 600. 2 stretches are compositionally biased toward basic and acidic residues: residues cysteine 232–glycine 243 and lysine 409–serine 420. Positions glycine 373–alanine 496 form a coiled coil. Residues glutamine 558–serine 569 show a composition bias toward basic and acidic residues.

Binds RAB27A that has been activated by GTP-binding via its N-terminus. Binds MYO5A via its C-terminal coiled coil domain.

The protein localises to the cytoplasm. Rab effector protein involved in melanosome transport. Serves as link between melanosome-bound RAB27A and the motor protein MYO5A. The protein is Melanophilin (MLPH) of Homo sapiens (Human).